The following is a 149-amino-acid chain: Protein FAM72C (149 aa).

Belongs to the FAM72 family.

This is Protein FAM72C (FAM72C) from Homo sapiens (Human).